A 300-amino-acid chain; its full sequence is Peptidyl-prolyl cis-trans isomerase E (300 aa).

The RRM domain maps to R6 to P84. One can recognise a PPIase cyclophilin-type domain in the interval F142–E298.

The protein belongs to the cyclophilin-type PPIase family. PPIase E subfamily.

The protein resides in the nucleus. It catalyses the reaction [protein]-peptidylproline (omega=180) = [protein]-peptidylproline (omega=0). In terms of biological role, PPIases accelerate the folding of proteins. It catalyzes the cis-trans isomerization of proline imidic peptide bonds in oligopeptides. Combines RNA-binding and PPIase activities. The polypeptide is Peptidyl-prolyl cis-trans isomerase E (cyp33) (Drosophila melanogaster (Fruit fly)).